The sequence spans 201 residues: MKKIKKIIQIGMIGGLAAVAGGALAGCGSNNDNADTLNQAANAQGAFVIIEETAPGQYKIKDQYPSDETRVVLKDLNGTERILSKEEMDALIKEEAAKIDNGTSNLTKDNGQISSGGLSLGETLLASAAGAILGSWIGSKLFNNQNFANQQRGAFSNQSAYQRSVNSFNKAGTTSSASSAKKSGFFGGGSKATSSSSSFGS.

The signal sequence occupies residues 1–26 (MKKIKKIIQIGMIGGLAAVAGGALAG). The N-palmitoyl cysteine moiety is linked to residue Cys-27. A lipid anchor (S-diacylglycerol cysteine) is attached at Cys-27. Residues 169 to 201 (NKAGTTSSASSAKKSGFFGGGSKATSSSSSFGS) form a disordered region. Low complexity-rich tracts occupy residues 170–184 (KAGTTSSASSAKKSG) and 191–201 (KATSSSSSFGS).

The protein belongs to the UPF0323 family.

Its subcellular location is the cell membrane. This is UPF0323 lipoprotein Cj0371 from Campylobacter jejuni subsp. jejuni serotype O:2 (strain ATCC 700819 / NCTC 11168).